Here is a 280-residue protein sequence, read N- to C-terminus: Formamidopyrimidine-DNA glycosylase (280 aa).

Pro2 serves as the catalytic Schiff-base intermediate with DNA. The active-site Proton donor is Glu3. Catalysis depends on Lys60, which acts as the Proton donor; for beta-elimination activity. Positions 93 and 112 each coordinate DNA. The FPG-type zinc finger occupies 240-274 (YVYGQHSKPCRVCGADIIKIKVGGRGTHLCPTCQP). Arg264 (proton donor; for delta-elimination activity) is an active-site residue.

Belongs to the FPG family. Monomer. Zn(2+) serves as cofactor.

The catalysed reaction is Hydrolysis of DNA containing ring-opened 7-methylguanine residues, releasing 2,6-diamino-4-hydroxy-5-(N-methyl)formamidopyrimidine.. The enzyme catalyses 2'-deoxyribonucleotide-(2'-deoxyribose 5'-phosphate)-2'-deoxyribonucleotide-DNA = a 3'-end 2'-deoxyribonucleotide-(2,3-dehydro-2,3-deoxyribose 5'-phosphate)-DNA + a 5'-end 5'-phospho-2'-deoxyribonucleoside-DNA + H(+). Its function is as follows. Involved in base excision repair of DNA damaged by oxidation or by mutagenic agents. Acts as a DNA glycosylase that recognizes and removes damaged bases. Has a preference for oxidized purines, such as 7,8-dihydro-8-oxoguanine (8-oxoG). Has AP (apurinic/apyrimidinic) lyase activity and introduces nicks in the DNA strand. Cleaves the DNA backbone by beta-delta elimination to generate a single-strand break at the site of the removed base with both 3'- and 5'-phosphates. The chain is Formamidopyrimidine-DNA glycosylase from Oceanobacillus iheyensis (strain DSM 14371 / CIP 107618 / JCM 11309 / KCTC 3954 / HTE831).